A 309-amino-acid chain; its full sequence is Serine/threonine-protein phosphatase 2A catalytic subunit alpha isoform (309 aa).

Mn(2+)-binding residues include Asp-57, His-59, Asp-85, and Asn-117. Positions 57, 59, and 85 each coordinate Zn(2+). Residues Asp-85 and Asn-117 each coordinate Fe(3+). His-118 (proton donor) is an active-site residue. The Mn(2+) site is built by His-167 and His-241. 2 residues coordinate Fe(3+): His-167 and His-241. Tyr-307 is subject to Phosphotyrosine. Leu-309 is modified (leucine methyl ester).

Belongs to the PPP phosphatase family. PP-1 subfamily. In terms of assembly, PP2A consists of a common heterodimeric core enzyme composed of PPP2CA, a 36 kDa catalytic subunit (subunit C), and PPP2R1A, a 65 kDa constant regulatory subunit (PR65 or subunit A), that associates with a variety of regulatory subunits. Proteins that associate with the core dimer include three families of regulatory subunits B (the R2/B/PR55/B55, R3/B''/PR72/PR130/PR59 and R5/B'/B56 families), the 48 kDa variable regulatory subunit, viral proteins, and cell signaling molecules. Interacts with the PP2A A subunit PPP2R1A. Interacts with the regulatory subunit PPP2R2A. Interacts (via C-terminus) with PTPA. Interacts with NXN; the interaction is direct. Interacts with KCTD20. Interacts with BTBD10. Interacts with SGO1 and SGO2. Interacts with RAF1. Interaction with IGBP1 protects unassembled PPP2CA from degradative ubiquitination. Interacts with GSK3B (via C2 domain). Interacts with MFHAS1; retains PPP2CA into the cytoplasm and excludes it from the nucleus. Interacts with PABIR1/FAM122A. Interacts with ADCY8; interaction is phosphatase activity-dependent; antagonizes interaction between ADCY8 and calmodulin. Interacts with CRTC3 (when phosphorylated at 'Ser-391'). Interacts with SPRY2; the interaction is inhibited by TESK1 interaction with SPRY2, possibly by vesicular sequestration of SPRY2. Interacts with TRAF3IP3. Interacts with AMBRA1 (via PxP motifs); enhancing interaction between PPP2CA and MYC or FOXO3. Forms a complex with AMBRA1 and BECN1; AMBRA1 and BECN1 components of the complex regulate MYC stability via different pathways. Part of the core of STRIPAK complexes composed of PP2A catalytic and scaffolding subunits, the striatins (PP2A regulatory subunits), the striatin-associated proteins MOB4, STRIP1 and STRIP2, PDCD10 and members of the STE20 kinases, such as STK24 and STK26. Phosphatase component of the Integrator-PP2A (INTAC) complex, composed of the Integrator core complex and protein phosphatase 2A subunits PPP2CA and PPP2R1A. The cofactor is Mn(2+). Fe(3+) serves as cofactor. It depends on Zn(2+) as a cofactor. In terms of processing, reversibly methyl esterified on Leu-309 by leucine carboxyl methyltransferase 1 (LCMT1) and protein phosphatase methylesterase 1 (PPME1). Carboxyl methylation influences the affinity of the catalytic subunit for the different regulatory subunits, thereby modulating the PP2A holoenzyme's substrate specificity, enzyme activity and cellular localization. Phosphorylation of either threonine (by autophosphorylation-activated protein kinase) or tyrosine results in inactivation of the phosphatase. Auto-dephosphorylation has been suggested as a mechanism for reactivation. Post-translationally, polyubiquitinated, leading to its degradation by the proteasome.

It localises to the cytoplasm. The protein resides in the nucleus. The protein localises to the chromosome. Its subcellular location is the centromere. It is found in the cytoskeleton. It localises to the spindle pole. It catalyses the reaction O-phospho-L-seryl-[protein] + H2O = L-seryl-[protein] + phosphate. The enzyme catalyses O-phospho-L-threonyl-[protein] + H2O = L-threonyl-[protein] + phosphate. Inhibited by the interaction between PPP2R2A and ARPP19; this inhibition is enhanced when ARPP19 is phosphorylated. Inhibited by the interaction between PPP2R2A and PABIR1/FAM122A. Catalytic subunit of protein phosphatase 2A (PP2A), a serine/threonine phosphatase involved in the regulation of a wide variety of enzymes, signal transduction pathways, and cellular events. PP2A is the major phosphatase for microtubule-associated proteins (MAPs). PP2A can modulate the activity of phosphorylase B kinase casein kinase 2, mitogen-stimulated S6 kinase, and MAP-2 kinase. Cooperates with SGO2 to protect centromeric cohesin from separase-mediated cleavage in oocytes specifically during meiosis I. Can dephosphorylate various proteins, such as SV40 large T antigen, AXIN1, p53/TP53, PIM3, WEE1. Activates RAF1 by dephosphorylating it at 'Ser-259'. Mediates dephosphorylation of WEE1, preventing its ubiquitin-mediated proteolysis, increasing WEE1 protein levels, and promoting the G2/M checkpoint. Mediates dephosphorylation of MYC; promoting its ubiquitin-mediated proteolysis: interaction with AMBRA1 enhances interaction between PPP2CA and MYC. Mediates dephosphorylation of FOXO3; promoting its stabilization: interaction with AMBRA1 enhances interaction between PPP2CA and FOXO3. Catalyzes dephosphorylation of the pyrin domain of NLRP3, promoting assembly of the NLRP3 inflammasome. Together with RACK1 adapter, mediates dephosphorylation of AKT1 at 'Ser-473', preventing AKT1 activation and AKT-mTOR signaling pathway. Dephosphorylation of AKT1 is essential for regulatory T-cells (Treg) homeostasis and stability. Catalyzes dephosphorylation of PIM3, promotinh PIM3 ubiquitination and proteasomal degradation. Part of the striatin-interacting phosphatase and kinase (STRIPAK) complexes. STRIPAK complexes have critical roles in protein (de)phosphorylation and are regulators of multiple signaling pathways including Hippo, MAPK, nuclear receptor and cytoskeleton remodeling. Different types of STRIPAK complexes are involved in a variety of biological processes such as cell growth, differentiation, apoptosis, metabolism and immune regulation. Key mediator of a quality checkpoint during transcription elongation as part of the Integrator-PP2A (INTAC) complex. The INTAC complex drives premature transcription termination of transcripts that are unfavorably configured for transcriptional elongation: within the INTAC complex, PPP2CA catalyzes dephosphorylation of the C-terminal domain (CTD) of Pol II subunit POLR2A/RPB1 and SUPT5H/SPT5, thereby preventing transcriptional elongation. This Homo sapiens (Human) protein is Serine/threonine-protein phosphatase 2A catalytic subunit alpha isoform (PPP2CA).